A 538-amino-acid chain; its full sequence is DALR anticodon-binding domain-containing protein 3 (538 aa).

Part of a complex containing tRNA(Arg) and METTL2. Interacts with tRNA(Arg)(CCU) and tRNA(Arg)(UCU). Interacts with METTL2.

In terms of biological role, involved in tRNA methylation. Facilitates the recognition and targeting of tRNA(Arg)(CCU) and tRNA(Arg)(UCU) substrates for N(3)-methylcytidine modification by METTL2. This Mus musculus (Mouse) protein is DALR anticodon-binding domain-containing protein 3 (Dalrd3).